Consider the following 366-residue polypeptide: Molybdopterin synthase catalytic subunit (366 aa).

Substrate contacts are provided by residues 101 to 102 (HR), Lys-117, and 124 to 126 (KKE).

Belongs to the MoaE family. MOCS2B subfamily. In terms of assembly, heterotetramer; composed of 2 small (Mocs2A) and 2 large (Mocs2B) subunits.

The protein localises to the cytoplasm. It catalyses the reaction 2 [molybdopterin-synthase sulfur-carrier protein]-C-terminal-Gly-aminoethanethioate + cyclic pyranopterin phosphate + H2O = molybdopterin + 2 [molybdopterin-synthase sulfur-carrier protein]-C-terminal Gly-Gly + 2 H(+). It functions in the pathway cofactor biosynthesis; molybdopterin biosynthesis. Functionally, catalytic subunit of the molybdopterin synthase complex, a complex that catalyzes the conversion of precursor Z into molybdopterin. Acts by mediating the incorporation of 2 sulfur atoms from thiocarboxylated Mocs2A into precursor Z to generate a dithiolene group. The protein is Molybdopterin synthase catalytic subunit of Drosophila mojavensis (Fruit fly).